Consider the following 377-residue polypeptide: RING-H2 finger protein ATL22 (377 aa).

The first 23 residues, 1–23, serve as a signal peptide directing secretion; that stretch reads MTSKLLPLLLNLIFLFFFPLLNA. Residues 244-264 traverse the membrane as a helical segment; it reads IMCLSLVGPLTALTFCVGLVM. The RING-type; atypical zinc-finger motif lies at 327-369; the sequence is CPICLSEYATKETVRCLPECEHCFHTECIDAWLKLHSSCPVCR.

This sequence belongs to the RING-type zinc finger family. ATL subfamily.

It localises to the membrane. It carries out the reaction S-ubiquitinyl-[E2 ubiquitin-conjugating enzyme]-L-cysteine + [acceptor protein]-L-lysine = [E2 ubiquitin-conjugating enzyme]-L-cysteine + N(6)-ubiquitinyl-[acceptor protein]-L-lysine.. The protein operates within protein modification; protein ubiquitination. The protein is RING-H2 finger protein ATL22 (ATL22) of Arabidopsis thaliana (Mouse-ear cress).